Here is a 118-residue protein sequence, read N- to C-terminus: Small ribosomal subunit protein uS13 (118 aa).

The disordered stretch occupies residues G94–K118.

This sequence belongs to the universal ribosomal protein uS13 family. In terms of assembly, part of the 30S ribosomal subunit. Forms a loose heterodimer with protein S19. Forms two bridges to the 50S subunit in the 70S ribosome.

Its function is as follows. Located at the top of the head of the 30S subunit, it contacts several helices of the 16S rRNA. In the 70S ribosome it contacts the 23S rRNA (bridge B1a) and protein L5 of the 50S subunit (bridge B1b), connecting the 2 subunits; these bridges are implicated in subunit movement. Contacts the tRNAs in the A and P-sites. In Pseudomonas aeruginosa (strain LESB58), this protein is Small ribosomal subunit protein uS13.